We begin with the raw amino-acid sequence, 586 residues long: Mitogen-activated protein kinase 15 (586 aa).

A Protein kinase domain is found at 14-305 (YDIKKRLGKG…AEEALEHPYV (292 aa)). ATP-binding positions include 20–28 (LGKGAYGIV) and K43. The Proton acceptor role is filled by D138. Disordered stretches follow at residues 354–506 (QKRE…DAPP) and 520–539 (NQRT…RFGR). Residues 382 to 393 (PAPPAGTNPAPQ) show a composition bias toward pro residues. Residues 400–414 (PQRAAIAAPNQPPAQ) are compositionally biased toward low complexity. Residues 415 to 439 (KDSTQQSPKIKAPSSNPITHSTTHG) are compositionally biased toward polar residues. Positions 452 to 463 (AGQQGAAGTTAQ) are enriched in low complexity. The span at 464 to 473 (EVRKEVESRS) shows a compositional bias: basic and acidic residues. Polar residues predominate over residues 484 to 498 (FSHSQQARAAATNSA).

Interacts with dvl2.

The protein resides in the cytoplasm. It is found in the cytoskeleton. The protein localises to the cilium basal body. It localises to the cell projection. Its subcellular location is the cilium. The protein resides in the cell junction. The enzyme catalyses L-seryl-[protein] + ATP = O-phospho-L-seryl-[protein] + ADP + H(+). It catalyses the reaction L-threonyl-[protein] + ATP = O-phospho-L-threonyl-[protein] + ADP + H(+). Atypical MAPK protein that regulates ciliogenesis by phosphorylating rcsd1 through its binding with dvl2. The sequence is that of Mitogen-activated protein kinase 15 from Xenopus laevis (African clawed frog).